The primary structure comprises 113 residues: Hydrogenase maturation factor HypA (113 aa).

A Ni(2+)-binding site is contributed by His2. Residues Cys73, Cys76, Cys89, and Cys92 each contribute to the Zn(2+) site.

Belongs to the HypA/HybF family.

In terms of biological role, involved in the maturation of [NiFe] hydrogenases. Required for nickel insertion into the metal center of the hydrogenase. The sequence is that of Hydrogenase maturation factor HypA from Rhodopseudomonas palustris (strain TIE-1).